The chain runs to 222 residues: S-crystallin SL20-1 (222 aa).

One can recognise a GST N-terminal domain in the interval 2 to 80 (PNYTLYYFNG…YLARENGYYG (79 aa)). The GST C-terminal domain occupies 82–222 (NNMDMFRIDY…YLKKRNNTNW (141 aa)).

This sequence belongs to the GST superfamily. As to expression, lens.

Functionally, S-crystallins are structural components of squids and octopi eye lens. Contains relatively little if any GST activity. This chain is S-crystallin SL20-1, found in Nototodarus sloanii (Wellington flying squid).